The sequence spans 298 residues: ADP/ATP translocase 2 (298 aa).

Met1 is modified (N-acetylmethionine). Topologically, residues 1–7 are mitochondrial intermembrane; it reads MTDAAVS. Position 2 is an N-acetylthreonine; in ADP/ATP translocase 2, N-terminally processed (Thr2). The stretch at 6–98 is one Solcar 1 repeat; it reads VSFAKDFLAG…FAFKDKYKQI (93 aa). Phosphoserine is present on Ser7. A helical transmembrane segment spans residues 8-37; sequence FAKDFLAGGVAAAISKTAVAPIERVKLLLQ. N6-malonyllysine is present on Lys23. Topologically, residues 38–74 are mitochondrial matrix; that stretch reads VQHASKQITADKQYKGIMDCVVRIPKEQGVLSFWRGN. Lys43 bears the N6-succinyllysine mark. Lys52 bears the N6,N6,N6-trimethyllysine; alternate mark. Lys52 is subject to N6,N6-dimethyllysine; alternate. Lys52 is modified (N6-methyllysine; alternate). A helical transmembrane segment spans residues 75–99; the sequence is LANVIRYFPTQALNFAFKDKYKQIF. ADP contacts are provided by Arg80 and Lys92. An N6-malonyllysine mark is found at Lys92 and Lys96. The Mitochondrial intermembrane segment spans residues 100–109; sequence LGGVDKRTQF. At Lys105 the chain carries N6-acetyllysine; alternate. Lys105 is subject to N6-succinyllysine; alternate. The helical transmembrane segment at 110–130 threads the bilayer; that stretch reads WRYFAGNLASGGAAGATSLCF. Solcar repeat units lie at residues 111–201 and 212–297; these read RYFA…AKGM and ISWM…IKKY. Topologically, residues 131 to 178 are mitochondrial matrix; the sequence is VYPLDFARTRLAADVGKAGDAREFKGLGDCLVKITKSDGIRGLYQGFN. Position 147 is an N6-methyllysine; alternate (Lys147). An N6-acetyllysine; alternate mark is found at Lys147 and Lys155. An N6-succinyllysine; alternate mark is found at Lys147 and Lys155. An N6-malonyllysine; alternate modification is found at Lys147. An N6-acetyllysine mark is found at Lys163 and Lys166. A helical membrane pass occupies residues 179–199; the sequence is VSVQGIIIYRAAYFGIYDTAK. Over 200–210 the chain is Mitochondrial intermembrane; the sequence is GMLPDPKNTHI. A helical transmembrane segment spans residues 211–231; it reads FISWMIAQSVTAVAGLTSYPF. The Mitochondrial matrix segment spans residues 232-273; it reads DTVRRRMMMQSGRKGSDIMYTGTIDCWKKIARDEGSKAFFKG. Arg235 serves as a coordination point for ADP. Residues 235 to 240 are important for transport activity; that stretch reads RRRMMM. The Nucleotide carrier signature motif motif lies at 235–240; it reads RRRMMM. Lys268 carries the post-translational modification N6-acetyllysine; alternate. An N6-succinyllysine; alternate modification is found at Lys268. Residues 274–291 form a helical membrane-spanning segment; sequence AWSNVLRGMGGAFVLVLY. Over 292-298 the chain is Mitochondrial intermembrane; the sequence is DEIKKYT.

This sequence belongs to the mitochondrial carrier (TC 2.A.29) family. As to quaternary structure, monomer. Component of the MMXD complex, which includes CIAO1, ERCC2, CIAO2B, MMS19 and SLC25A5/ANT2. Interacts with AK4. Interacts with TIMM44; leading to inhibit the presequence translocase TIMM23, thereby promoting stabilization of PINK1. Trimethylated by ANTKMT at Lys-52.

It localises to the mitochondrion inner membrane. The protein localises to the membrane. It carries out the reaction ADP(in) + ATP(out) = ADP(out) + ATP(in). It catalyses the reaction H(+)(in) = H(+)(out). With respect to regulation, the matrix-open state (m-state) is inhibited by the membrane-permeable bongkrekic acid (BKA). The cytoplasmic-open state (c-state) is inhibited by the membrane-impermeable toxic inhibitor carboxyatractyloside (CATR). Proton transporter activity is inhibited by ADP:ATP antiporter activity. Functionally, ADP:ATP antiporter that mediates import of ADP into the mitochondrial matrix for ATP synthesis, and export of ATP out to fuel the cell. Cycles between the cytoplasmic-open state (c-state) and the matrix-open state (m-state): operates by the alternating access mechanism with a single substrate-binding site intermittently exposed to either the cytosolic (c-state) or matrix (m-state) side of the inner mitochondrial membrane. In addition to its ADP:ATP antiporter activity, also involved in mitochondrial uncoupling and mitochondrial permeability transition pore (mPTP) activity. Plays a role in mitochondrial uncoupling by acting as a proton transporter: proton transport uncouples the proton flows via the electron transport chain and ATP synthase to reduce the efficiency of ATP production and cause mitochondrial thermogenesis. Proton transporter activity is inhibited by ADP:ATP antiporter activity, suggesting that SLC25A5/ANT2 acts as a master regulator of mitochondrial energy output by maintaining a delicate balance between ATP production (ADP:ATP antiporter activity) and thermogenesis (proton transporter activity). Proton transporter activity requires free fatty acids as cofactor, but does not transport it. Probably mediates mitochondrial uncoupling in tissues that do not express UCP1. Also plays a key role in mPTP opening, a non-specific pore that enables free passage of the mitochondrial membranes to solutes of up to 1.5 kDa, and which contributes to cell death. It is however unclear if SLC25A5/ANT2 constitutes a pore-forming component of mPTP or regulates it. Acts as a regulator of mitophagy independently of ADP:ATP antiporter activity: promotes mitophagy via interaction with TIMM44, leading to inhibit the presequence translocase TIMM23, thereby promoting stabilization of PINK1. As part of the mitotic spindle-associated MMXD complex it may play a role in chromosome segregation. The polypeptide is ADP/ATP translocase 2 (Tachyglossus aculeatus aculeatus (Southeast Australian short-beaked echidna)).